A 1343-amino-acid chain; its full sequence is DNA-directed RNA polymerase subunit beta (1343 aa).

The protein belongs to the RNA polymerase beta chain family. The RNAP catalytic core consists of 2 alpha, 1 beta, 1 beta' and 1 omega subunit. When a sigma factor is associated with the core the holoenzyme is formed, which can initiate transcription.

The enzyme catalyses RNA(n) + a ribonucleoside 5'-triphosphate = RNA(n+1) + diphosphate. In terms of biological role, DNA-dependent RNA polymerase catalyzes the transcription of DNA into RNA using the four ribonucleoside triphosphates as substrates. The polypeptide is DNA-directed RNA polymerase subunit beta (Shewanella baltica (strain OS155 / ATCC BAA-1091)).